Reading from the N-terminus, the 491-residue chain is Cobyric acid synthase (491 aa).

A GATase cobBQ-type domain is found at 250–437 (RLRVVVPVLP…LHGIFDHPAA (188 aa)). Residue Cys-331 is the Nucleophile of the active site. The active site involves His-429.

The protein belongs to the CobB/CobQ family. CobQ subfamily.

Its pathway is cofactor biosynthesis; adenosylcobalamin biosynthesis. In terms of biological role, catalyzes amidations at positions B, D, E, and G on adenosylcobyrinic A,C-diamide. NH(2) groups are provided by glutamine, and one molecule of ATP is hydrogenolyzed for each amidation. In Xanthomonas campestris pv. campestris (strain B100), this protein is Cobyric acid synthase.